The following is a 372-amino-acid chain: Tyrosine--tRNA ligase (372 aa).

L-tyrosine contacts are provided by Y37, Y169, Q173, D176, and Q191. The short motif at 246–250 (KMSKS) is the 'KMSKS' region element. ATP is bound at residue K249.

Belongs to the class-I aminoacyl-tRNA synthetase family. TyrS type 4 subfamily. As to quaternary structure, homodimer.

Its subcellular location is the cytoplasm. It catalyses the reaction tRNA(Tyr) + L-tyrosine + ATP = L-tyrosyl-tRNA(Tyr) + AMP + diphosphate + H(+). Catalyzes the attachment of tyrosine to tRNA(Tyr) in a two-step reaction: tyrosine is first activated by ATP to form Tyr-AMP and then transferred to the acceptor end of tRNA(Tyr). The sequence is that of Tyrosine--tRNA ligase from Pyrobaculum calidifontis (strain DSM 21063 / JCM 11548 / VA1).